We begin with the raw amino-acid sequence, 931 residues long: Protocadherin gamma-A1 (931 aa).

The first 28 residues, 1–28 (MKIQKKLTGCSRLMLLCLSLELLLEAGA), serve as a signal peptide directing secretion. Cadherin domains follow at residues 29–133 (GNIH…TPQF), 134–242 (QLEE…PPAF), 243–347 (TQAQ…APEV), 348–452 (TITS…SPVF), 453–562 (HQDS…APEI), and 570–682 (DGST…EPSA). Residues 29–692 (GNIHYSVPEE…KPNDSDLTLY (664 aa)) lie on the Extracellular side of the membrane. 3 N-linked (GlcNAc...) asparagine glycosylation sites follow: Asn265, Asn419, and Asn545. Asn685 carries an N-linked (GlcNAc...) asparagine glycan. A helical membrane pass occupies residues 693–713 (LVVAAAAVSCVFLAFVIVLLA). The Cytoplasmic portion of the chain corresponds to 714 to 931 (HRLRRWHKSR…KKKSGKKEKK (218 aa)). Disordered stretches follow at residues 801–840 (KKEP…WPNN) and 901–931 (ATLT…KEKK). A compositionally biased stretch (polar residues) spans 805–840 (FSQQAPPNTDWRFSQAQRPGTSGSQNGDDTGTWPNN). A compositionally biased stretch (basic residues) spans 921–931 (NKKKSGKKEKK).

It localises to the cell membrane. Functionally, potential calcium-dependent cell-adhesion protein. May be involved in the establishment and maintenance of specific neuronal connections in the brain. This Homo sapiens (Human) protein is Protocadherin gamma-A1 (PCDHGA1).